The chain runs to 894 residues: GTPase-activating protein GYP5 (894 aa).

Over residues 1-23 (MSSDKSIEKNTDTIASEVHEGDN) the composition is skewed to basic and acidic residues. Residues 1–324 (MSSDKSIEKN…VPPPLEEEMK (324 aa)) form a disordered region. 2 positions are modified to phosphoserine: S25 and S30. T89 carries the post-translational modification Phosphothreonine. The span at 134-164 (IEKEYDAVKENEKVYADTKEVVSSPENREVT) shows a compositional bias: basic and acidic residues. Composition is skewed to polar residues over residues 184–200 (GTTTAANANDISISSEV) and 268–279 (SSENEVSAIPTT). At S389 the chain carries Phosphoserine. One can recognise a Rab-GAP TBC domain in the interval 451 to 630 (GIPPQIRGII…RIFDIVFVEG (180 aa)). A coiled-coil region spans residues 732–872 (EKEQKKEDHY…INKEQVSTAS (141 aa)).

This sequence belongs to the GYP5 family. In terms of assembly, interacts with GYL1 and RVS167; and is part of SEC4-containing complexes.

The protein localises to the cytoplasm. The protein resides in the bud. It localises to the bud neck. Its function is as follows. GTPase-activating protein which accelerates the GTP hydrolysis rate of YPT1 and SEC4. Involved in ER to Golgi trafficking and polarized exocytosis. The chain is GTPase-activating protein GYP5 (GYP5) from Saccharomyces cerevisiae (strain ATCC 204508 / S288c) (Baker's yeast).